Consider the following 392-residue polypeptide: Branched-chain-amino-acid aminotransferase, mitochondrial (392 aa).

The transit peptide at 1–27 (MAAAALGQIWARKLLSVPWLLCGPRRY) directs the protein to the mitochondrion. Tyr-168 is a substrate binding site. An N6-(pyridoxal phosphate)lysine modification is found at Lys-229. N6-acetyllysine is present on Lys-321.

The protein belongs to the class-IV pyridoxal-phosphate-dependent aminotransferase family. As to quaternary structure, homodimer. It depends on pyridoxal 5'-phosphate as a cofactor. As to expression, ubiquitous.

The protein resides in the mitochondrion. The enzyme catalyses L-leucine + 2-oxoglutarate = 4-methyl-2-oxopentanoate + L-glutamate. It catalyses the reaction L-isoleucine + 2-oxoglutarate = (S)-3-methyl-2-oxopentanoate + L-glutamate. It carries out the reaction L-valine + 2-oxoglutarate = 3-methyl-2-oxobutanoate + L-glutamate. Catalyzes the first reaction in the catabolism of the essential branched chain amino acids leucine, isoleucine, and valine. May also function as a transporter of branched chain alpha-keto acids. The protein is Branched-chain-amino-acid aminotransferase, mitochondrial (BCAT2) of Homo sapiens (Human).